We begin with the raw amino-acid sequence, 95 residues long: Putative small ubiquitin-related modifier 7 (95 aa).

Residues 13–90 enclose the Ubiquitin-like domain; sequence SHITIKIKSQ…IDAFVDQIAG (78 aa). A Glycyl lysine isopeptide (Gly-Lys) (interchain with K-? in acceptor proteins) cross-link involves residue glycine 90.

Belongs to the ubiquitin family. SUMO subfamily. As to quaternary structure, interacts with SAE2, SCE1, SIZ1 and MMS21 Covalently attached to a number of proteins.

The protein resides in the nucleus. It localises to the cytoplasm. Functionally, ubiquitin-like protein which can be covalently attached to target lysines as a monomer. Does not seem to be involved in protein degradation and may function as an antagonist of ubiquitin in the degradation process. This Arabidopsis thaliana (Mouse-ear cress) protein is Putative small ubiquitin-related modifier 7 (SUMO7).